A 132-amino-acid chain; its full sequence is MRHYELVLLVHPDQSDQVVGMVERYIKLVQDNNGTIHRLEDWGRRQLAYPINKIHKAHYVLFNIETDGETLAELEELFRYNDAIIRSLVMRRDDAVTEESQLAKNADEKRARKATTRRPDRDDSDDNDHSED.

The tract at residues 94 to 132 is disordered; that stretch reads DAVTEESQLAKNADEKRARKATTRRPDRDDSDDNDHSED. Residues 122-132 show a composition bias toward acidic residues; the sequence is DDSDDNDHSED.

This sequence belongs to the bacterial ribosomal protein bS6 family.

Functionally, binds together with bS18 to 16S ribosomal RNA. The chain is Small ribosomal subunit protein bS6 from Psychrobacter arcticus (strain DSM 17307 / VKM B-2377 / 273-4).